Consider the following 371-residue polypeptide: tRNA-specific 2-thiouridylase MnmA (371 aa).

Residues 13–20 (GMSGGVDS) and methionine 39 contribute to the ATP site. The interval 99 to 101 (NPD) is interaction with target base in tRNA. Catalysis depends on cysteine 104, which acts as the Nucleophile. A disulfide bond links cysteine 104 and cysteine 200. Glycine 128 contacts ATP. Positions 150 to 152 (KDQ) are interaction with tRNA. Catalysis depends on cysteine 200, which acts as the Cysteine persulfide intermediate. Residues 309–310 (RY) form an interaction with tRNA region.

This sequence belongs to the MnmA/TRMU family.

Its subcellular location is the cytoplasm. The catalysed reaction is S-sulfanyl-L-cysteinyl-[protein] + uridine(34) in tRNA + AH2 + ATP = 2-thiouridine(34) in tRNA + L-cysteinyl-[protein] + A + AMP + diphosphate + H(+). Its function is as follows. Catalyzes the 2-thiolation of uridine at the wobble position (U34) of tRNA, leading to the formation of s(2)U34. The protein is tRNA-specific 2-thiouridylase MnmA of Bacillus subtilis (strain 168).